Here is a 798-residue protein sequence, read N- to C-terminus: Sodium/hydrogen exchanger 4 (798 aa).

Topologically, residues M1–N13 are cytoplasmic. Positions C14–S28 form an intramembrane region, name=A/M1. Over D29–I69 the chain is Cytoplasmic. The segment at residues P70 to Y90 is an intramembrane region (name=B/M2). The Cytoplasmic portion of the chain corresponds to H91–P94. The helical transmembrane segment at G95–F115 threads the bilayer. At G116–S127 the chain is on the extracellular side. A helical transmembrane segment spans residues S128–T148. Residues R149–N154 lie on the Cytoplasmic side of the membrane. The chain crosses the membrane as a helical span at residues I155–L175. Over S176–N196 the chain is Extracellular. Residues L197–E217 form a helical membrane-spanning segment. Residues A218–M226 lie on the Cytoplasmic side of the membrane. Residues M227 to I247 traverse the membrane as a helical segment. Residues A248–F270 are Extracellular-facing. A helical transmembrane segment spans residues I271–I291. Residues T292–L304 are Cytoplasmic-facing. The helical transmembrane segment at I305–I325 threads the bilayer. Over L326–K356 the chain is Extracellular. N-linked (GlcNAc...) asparagine glycosylation is present at N342. The chain crosses the membrane as a helical span at residues M357 to S373. The Cytoplasmic segment spans residues T374–A384. The helical transmembrane segment at F385–F405 threads the bilayer. Residues Y406 to D420 are Extracellular-facing. Residues Q421 to L441 constitute an intramembrane region (name=L). Topologically, residues P442–K450 are extracellular. A helical transmembrane segment spans residues M451–V471. Topologically, residues G472 to K798 are cytoplasmic. 2 disordered regions span residues P662–S690 and R776–K798. A compositionally biased stretch (basic residues) spans G784–K798.

It belongs to the monovalent cation:proton antiporter 1 (CPA1) transporter (TC 2.A.36) family. In terms of assembly, homodimer; each protomer has one site for sodium and one site for proton binding. Interacts with CHP1 and CHP2. May be phosphorylated.

The protein localises to the basolateral cell membrane. It is found in the apical cell membrane. The protein resides in the zymogen granule membrane. The catalysed reaction is Na(+)(in) + H(+)(out) = Na(+)(out) + H(+)(in). The enzyme catalyses Na(+)(out) + NH4(+)(in) = Na(+)(in) + NH4(+)(out). In terms of biological role, electroneutral antiporter that exchanges sodium for protons or ammonium ions at the basolateral membrane of epithelia to regulate cell volume and intracellular pH upon hypertonic conditions. As part of transcellular ammonia transport in renal tubules, mediates basolateral ammonium extrusion in the medullary thick ascending limb, regulating the corticopapillary ammonium gradient and overall renal acid excretion. Mediates sodium:proton exchange in gastric parietal cells secondary to cAMP-dependent acid secretion and hyperosmolarity. Possibly coupled to chloride:bicarbonate antiporter, enables loading of parietal cells with sodium and chloride ions to maintain cell volume and normal gastric acid secretion. Functions as a sodium sensor in neurons of organum vasculosum of the lamina terminalis where it regulates water intake in response to increased sodium concentration in body fluids. This Homo sapiens (Human) protein is Sodium/hydrogen exchanger 4 (SLC9A4).